A 476-amino-acid polypeptide reads, in one-letter code: Methylenetetrahydrofolate--tRNA-(uracil-5-)-methyltransferase TrmFO (476 aa).

FAD is bound at residue 14 to 19 (GGGLAG).

Belongs to the MnmG family. TrmFO subfamily. FAD serves as cofactor.

The protein localises to the cytoplasm. It catalyses the reaction uridine(54) in tRNA + (6R)-5,10-methylene-5,6,7,8-tetrahydrofolate + NADH + H(+) = 5-methyluridine(54) in tRNA + (6S)-5,6,7,8-tetrahydrofolate + NAD(+). The enzyme catalyses uridine(54) in tRNA + (6R)-5,10-methylene-5,6,7,8-tetrahydrofolate + NADPH + H(+) = 5-methyluridine(54) in tRNA + (6S)-5,6,7,8-tetrahydrofolate + NADP(+). Its function is as follows. Catalyzes the folate-dependent formation of 5-methyl-uridine at position 54 (M-5-U54) in all tRNAs. The protein is Methylenetetrahydrofolate--tRNA-(uracil-5-)-methyltransferase TrmFO of Brucella anthropi (strain ATCC 49188 / DSM 6882 / CCUG 24695 / JCM 21032 / LMG 3331 / NBRC 15819 / NCTC 12168 / Alc 37) (Ochrobactrum anthropi).